Consider the following 94-residue polypeptide: MKYYDLIKSPIVTEVTNKLIERQNKYTFKVAKTANKIEIKKAFEHIFKVKVTVNTSNVLPRFKRKGKYAGYTAGYKKAVVKVTSGEKIAILAND.

This sequence belongs to the universal ribosomal protein uL23 family. As to quaternary structure, part of the 50S ribosomal subunit. Contacts protein L29, and trigger factor when it is bound to the ribosome.

Its function is as follows. One of the early assembly proteins it binds 23S rRNA. One of the proteins that surrounds the polypeptide exit tunnel on the outside of the ribosome. Forms the main docking site for trigger factor binding to the ribosome. The polypeptide is Large ribosomal subunit protein uL23 (Phytoplasma australiense).